The sequence spans 359 residues: MDPLGPAKPQWSWRCCLTTLLFQLLMAVCFFSYLRVSQDDPTVYPNGSRFPDSTGTPAHSIPLILLWTWPFNKPIALPRCSEMVPGTADCNITADRKVYPQADAVIVHHREVMYNPSAQLPRSPRRQGQRWIWFSMESPSHCWQLKAMDGYFNLTMSYRSDSDIFTPYGWLEPWSGQPAHPPLNLSAKTELVAWAVSNWGPNSARVRYYQSLQAHLKVDVYGRSHKPLPQGTMMETLSRYKFYLAFENSLHPDYITEKLWRNALEAWAVPVVLGPSRSNYERFLPPDAFIHVDDFQSPKDLARYLQELDKDHARYLSYFRWRETLRPRSFSWALAFCKACWKLQEESRYQTRGIAAWFT.

Residues 1-14 (MDPLGPAKPQWSWR) are Cytoplasmic-facing. Residues 15–34 (CCLTTLLFQLLMAVCFFSYL) traverse the membrane as a helical; Signal-anchor for type II membrane protein segment. Topologically, residues 35-359 (RVSQDDPTVY…QTRGIAAWFT (325 aa)) are lumenal. N-linked (GlcNAc...) asparagine glycosylation is found at asparagine 46, asparagine 91, asparagine 153, and asparagine 184. A determines site-specific fucosylation region spans residues 73-112 (KPIALPRCSEMVPGTADCNITADRKVYPQADAVIVHHREV).

Belongs to the glycosyltransferase 10 family. Homodimer and monomer. Monomer (secreted form). N-glycosylated. Post-translationally, proteolytic cleavage releases a secreted glycoform of 43 kDa. In terms of tissue distribution, kidney, liver, colon, small intestine, bladder, uterus and salivary gland.

Its subcellular location is the golgi apparatus. It localises to the golgi stack membrane. The protein localises to the secreted. It catalyses the reaction a beta-D-galactosyl-(1-&gt;4)-N-acetyl-beta-D-glucosaminyl derivative + GDP-beta-L-fucose = a beta-D-galactosyl-(1-&gt;4)-[alpha-L-fucosyl-(1-&gt;3)]-N-acetyl-beta-D-glucosaminyl derivative + GDP + H(+). The catalysed reaction is an N-acetyl-alpha-neuraminyl-(2-&gt;3)-beta-D-galactosyl-(1-&gt;4)-N-acetyl-beta-D-glucosaminyl derivative + GDP-beta-L-fucose = an alpha-Neu5Ac-(2-&gt;3)-beta-D-Gal-(1-&gt;4)-[alpha-L-Fuc-(1-&gt;3)]-beta-D-GlcNAc derivative + GDP + H(+). The enzyme catalyses an alpha-Neu5Ac-(2-&gt;3)-beta-D-Gal-(1-&gt;4)-beta-D-GlcNAc-(1-&gt;3)-beta-D-Gal-(1-&gt;4)-[alpha-L-Fuc-(1-&gt;3)]-beta-D-GlcNAc derivative + GDP-beta-L-fucose = an alpha-Neu5Ac-(2-&gt;3)-beta-D-Gal-(1-&gt;4)-[alpha-L-Fuc-(1-&gt;3)]-beta-D-GlcNAc-(1-&gt;3)-beta-D-Gal-(1-&gt;4)-[alpha-L-Fuc-(1-&gt;3)]-beta-D-GlcNAc derivative + GDP + H(+). It carries out the reaction a neolactoside nLc6Cer + GDP-beta-L-fucose = beta-D-Gal-(1-&gt;4)-[alpha-L-Fuc-(1-&gt;3)]-beta-D-GlcNAc-(1-&gt;3)-beta-D-Gal-(1-&gt;4)-beta-D-GlcNAc-(1-&gt;3)-beta-D-Gal-(1-&gt;4)-beta-D-Glc-(1&lt;-&gt;1')-Cer + GDP + H(+). It catalyses the reaction a neolactoside nLc6Cer + GDP-beta-L-fucose = beta-D-galactosyl-(1-&gt;4)-N-acetyl-beta-D-glucosaminyl-(1-&gt;3)-beta-D-galactosyl-(1-&gt;4)-[alpha-L-fucosyl-(1-&gt;3)]-N-acetyl-beta-D-glucosaminyl-(1-&gt;3)-beta-D-galactosyl-(1-&gt;4)-beta-D-glucosyl-(1&lt;-&gt;1')-ceramide + GDP + H(+). The catalysed reaction is a neolactoside VI(3)-alpha-NeuNAc-nLc6Cer + GDP-beta-L-fucose = a neolactoside VI(3)-alpha-NeuAc,V(3)-alphaFuc-nLc6Cer + GDP + H(+). The enzyme catalyses beta-D-galactosyl-(1-&gt;4)-N-acetyl-D-glucosamine + GDP-beta-L-fucose = beta-D-galactosyl-(1-&gt;4)-[alpha-L-fucosyl-(1-&gt;3)]-N-acetyl-D-glucosamine + GDP + H(+). It carries out the reaction N-acetyl-alpha-neuraminosyl-(2-&gt;3)-beta-D-galactosyl-(1-&gt;4)-N-acetyl-beta-D-glucosamine + GDP-beta-L-fucose = N-acetyl-alpha-neuraminosyl-(2-&gt;3)-beta-D-galactosyl-(1-&gt;4)-[alpha-L-fucosyl-(1-&gt;3)]-N-acetyl-beta-D-glucosamine + GDP + H(+). It catalyses the reaction lactose + GDP-beta-L-fucose = beta-D-galactosyl-(1-&gt;4)-[alpha-L-fucosyl-(1-&gt;3)]-D-glucose + GDP + H(+). The catalysed reaction is alpha-L-Fuc-(1-&gt;2)-beta-D-Gal-(1-&gt;4)-D-Glc + GDP-beta-L-fucose = alpha-L-Fuc-(1-&gt;2)-beta-D-Gal-(1-&gt;4)-[alpha-L-Fuc-(1-&gt;3)]-D-Glc + GDP + H(+). The enzyme catalyses a beta-D-galactosyl-(1-&gt;4)-N-acetyl-beta-D-6-sulfooxy-glucosaminyl derivative + GDP-beta-L-fucose = a beta-D-galactosyl-(1-&gt;4)-[alpha-L-fucosyl-(1-&gt;3)]-N-acetyl-beta-D-6-sulfooxy-glucosaminyl derivative + GDP + H(+). The protein operates within protein modification; protein glycosylation. Its function is as follows. Catalyzes the transfer of L-fucose, from a guanosine diphosphate-beta-L-fucose, to the N-acetyl glucosamine (GlcNAc) of a distal alpha2,3 sialylated lactosamine unit of a glycoprotein- or a glycolipid-linked sialopolylactosamines chain or of a distal or internal lactosamine unit of a neutral glycoprotein- or a glycolipid-linked polylactosamines chain through an alpha-1,3 glycosidic linkage and participates in surface expression of the sialyl Lewis X (sLe(x)), Lewis X (Le(x)) and non sialylated VIM2 determinants. Moreover transfers fucose to H-type 2 (Fucalpha1-2Galbeta1-4GlcNAc) chain acceptor substrates and participates in difucosylated sialyl Lewis x determinants. Also fucosylates a polylactosamine substrate having a 6 sulfate modification at the GlcNAc moiety and gives rise to sialyl and non-sialyl 6-sulfo lewis X. Does not have activity towards type 1 ((Galbeta1-3GlcNAc)) and H-type 1 chain (Fucalpha1-2Galbeta1-3GlcNAc) acceptors substrates. In terms of biological role, does not have alpha(1,3)-fucosyltransferase activity. The protein is 4-galactosyl-N-acetylglucosaminide 3-alpha-L-fucosyltransferase FUT6 of Homo sapiens (Human).